The following is a 649-amino-acid chain: Acetyl-coenzyme A synthetase (649 aa).

Residues 191–194 (RGGR), Thr-311, and Asn-335 contribute to the CoA site. Residues 387–389 (GEP), 411–416 (DTWWQT), Asp-500, and Arg-515 contribute to the ATP site. Ser-523 provides a ligand contact to CoA. Arg-526 contacts ATP. Val-537, Phe-539, and Ile-542 together coordinate Mg(2+). Position 584 (Arg-584) interacts with CoA. Lys-609 carries the N6-acetyllysine modification.

Belongs to the ATP-dependent AMP-binding enzyme family. The cofactor is Mg(2+). In terms of processing, acetylated. Deacetylation by the SIR2-homolog deacetylase activates the enzyme.

The catalysed reaction is acetate + ATP + CoA = acetyl-CoA + AMP + diphosphate. Its function is as follows. Catalyzes the conversion of acetate into acetyl-CoA (AcCoA), an essential intermediate at the junction of anabolic and catabolic pathways. AcsA undergoes a two-step reaction. In the first half reaction, AcsA combines acetate with ATP to form acetyl-adenylate (AcAMP) intermediate. In the second half reaction, it can then transfer the acetyl group from AcAMP to the sulfhydryl group of CoA, forming the product AcCoA. The sequence is that of Acetyl-coenzyme A synthetase from Vibrio cholerae serotype O1 (strain ATCC 39315 / El Tor Inaba N16961).